Here is a 1226-residue protein sequence, read N- to C-terminus: DNA-directed RNA polymerase subunit beta (1226 aa).

It belongs to the RNA polymerase beta chain family. As to quaternary structure, the RNAP catalytic core consists of 2 alpha, 1 beta, 1 beta' and 1 omega subunit. When a sigma factor is associated with the core the holoenzyme is formed, which can initiate transcription.

It carries out the reaction RNA(n) + a ribonucleoside 5'-triphosphate = RNA(n+1) + diphosphate. Its function is as follows. DNA-dependent RNA polymerase catalyzes the transcription of DNA into RNA using the four ribonucleoside triphosphates as substrates. This is DNA-directed RNA polymerase subunit beta from Leptospira borgpetersenii serovar Hardjo-bovis (strain JB197).